The chain runs to 639 residues: Chaperone protein HtpG (639 aa).

The a; substrate-binding stretch occupies residues methionine 1–arginine 348. The segment at glutamate 349 to arginine 565 is b. The tract at residues leucine 566 to glycine 639 is c.

The protein belongs to the heat shock protein 90 family. Homodimer.

It is found in the cytoplasm. Molecular chaperone. Has ATPase activity. The sequence is that of Chaperone protein HtpG from Treponema pallidum (strain Nichols).